Consider the following 1389-residue polypeptide: CRISPR-associated endoribonuclease Cas13a (1389 aa).

The interval 1–347 is NTD; it reads MGNLFGHKRW…DKHEKFKIER (347 aa). Arg219 contacts crRNA. 3 binds crRNA regions span residues 330-342, 405-408, and 432-436; these read YIKS…KHEK, KKHY, and YRYLK. The tract at residues 348–498 is helical-1; sequence ENKKDKIVKF…KLRHNDIDMT (151 aa). Catalysis depends on for pre-crRNA processing residues Arg438 and Lys441. Lys441 contributes to the crRNA binding site. The binds crRNA stretch occupies residues 471 to 475; the sequence is KILKR. Lys489 contributes to the crRNA binding site. Residues 499–636 form an HEPN-like fold 1-I region; sequence TVNTDDFSRL…LKISDEEVSK (138 aa). The tract at residues 502 to 509 is binds crRNA; sequence TDDFSRLH. Catalysis depends on for target ssRNA cleavage residues Arg597 and His602. The tract at residues 637-828 is helical-2; it reads ALNLDVVFKD…ERITVKTSDK (192 aa). CrRNA is bound at residue Gln759. The tract at residues 829–899 is HEPN-like fold 1-II; sequence TIVINDDFEY…ECITENWNLN (71 aa). Residues 853–858 are binds crRNA; it reads NKIRNR. Trp865 contributes to the crRNA binding site. Coiled coils occupy residues 893–920, 968–1046, and 1101–1131; these read TENW…FKIQ, EIDK…FQEI, and KNKI…KYIK. The tract at residues 900 to 1170 is linker; sequence LEEFIQKMKE…EYKKIRDLVE (271 aa). An HEPN-like fold 2 region spans residues 1170 to 1290; sequence EFNYLNKIES…ISHFYIVRNP (121 aa). Active-site for target ssRNA cleavage residues include Arg1278 and His1283. Binds crRNA regions lie at residues 1311–1316 and 1338–1339; these read TRYNNS and KK.

This sequence belongs to the CRISPR-associated endoribonuclease Cas13a family. Monomer. Mg(2+) serves as cofactor.

Its activity is regulated as follows. RNase activity on target is decreased by EDTA. Target RNA acts as an activator for non-specific ssRNA degradation. Its function is as follows. CRISPR (clustered regularly interspaced short palindromic repeat), is an adaptive immune system that provides protection against mobile genetic elements (viruses, transposable elements and conjugative plasmids). CRISPR clusters contain sequences complementary to antecedent mobile elements (spacers) and target invading nucleic acids. Unlike many single-component effectors, this CRISPR-Cas system targets RNA. CRISPR clusters are transcribed from pre-CRISPR RNA (crRNA) and processed into crRNA (optimally 28 nucleotides in this system) by this protein. This protein processes pre-crRNA at a 'non-typical' site 1 nucleotide upstream of the pre-crRNA stem-loop; it cleaves pre-crRNA from L.buccalis and L.wadei in a similar fashion, whereas the enzymes from the latter 2 bacteria cleave their own pre-crRNA 3 nt further upstream. When the appropriate target sequences are cloned into the CRISPR array, confers immunity to ssRNA(+) enterobacteria phage MS2. Cleaves linear target ssRNA in a crRNA-dependent fashion, preferentially before U residues; has no activity on partially dsRNA, ssDNA or dsDNA. RNA secondary structure surrounding the target influence the cleavage site and efficiency; unlike other CRISPR-Cas effectors Cas13a cleaves outside of the crRNA binding site. In the presence of a viable RNA target other RNAs are also degraded (called collateral RNA degradation), suggesting this type of CRISPR-Cas might also prevent viral spread by inducing programmed cell death or dormancy. This system has a 3' protospacer flanking site (PFS), it does not cleave when the 3' PFS is G (PFS is equivalent to PAM, the protospacer adjacent motif). Mutations of its active site residues results in an RNA-programmed RNA-binding protein. The protein is CRISPR-associated endoribonuclease Cas13a of Leptotrichia shahii (strain DSM 19757 / CCUG 47503 / CIP 107916 / JCM 16776 / LB37).